Reading from the N-terminus, the 543-residue chain is Protein pbn1 (543 aa).

The Lumenal portion of the chain corresponds to 1-503 (MRRRITFVQR…KGFFQSKAIE (503 aa)). N409 is a glycosylation site (N-linked (GlcNAc...) asparagine). Residues 504 to 524 (LGTMIVIGLGSLWVLWKLGAI) form a helical membrane-spanning segment. Residues 525–543 (AWSSGTRPQRKSTKQKKSE) lie on the Cytoplasmic side of the membrane.

This sequence belongs to the PIGX family.

The protein localises to the endoplasmic reticulum membrane. The protein operates within glycolipid biosynthesis; glycosylphosphatidylinositol-anchor biosynthesis. In terms of biological role, required for proper folding and/or the stability of a subset of proteins in the endoplasmic reticulum. Component of glycosylphosphatidylinositol-mannosyltransferase 1 which transfers the first of the 4 mannoses in the GPI-anchor precursors during GPI-anchor biosynthesis. Probably acts by stabilizing the mannosyltransferase gpi14. This chain is Protein pbn1 (pbn1), found in Aspergillus oryzae (strain ATCC 42149 / RIB 40) (Yellow koji mold).